The following is a 101-amino-acid chain: Large ribosomal subunit protein eL43 (101 aa).

The segment at 40–62 adopts a C4-type zinc-finger fold; sequence CPSCRSLVRLQRIAFGIWKCPKC.

The protein belongs to the eukaryotic ribosomal protein eL43 family. The cofactor is Zn(2+).

In Pyrobaculum neutrophilum (strain DSM 2338 / JCM 9278 / NBRC 100436 / V24Sta) (Thermoproteus neutrophilus), this protein is Large ribosomal subunit protein eL43.